Here is a 370-residue protein sequence, read N- to C-terminus: Phosphoserine aminotransferase (370 aa).

Residue methionine 1 is modified to N-acetylmethionine. Residues histidine 44 and arginine 45 each coordinate O-phospho-L-serine. Lysine 51 carries the N6-acetyllysine modification. Pyridoxal 5'-phosphate contacts are provided by glycine 79, cysteine 80, and tryptophan 107. At lysine 127 the chain carries N6-acetyllysine. Residues threonine 156, aspartate 176, and glutamine 199 each contribute to the pyridoxal 5'-phosphate site. Residue lysine 200 is modified to N6-(pyridoxal phosphate)lysine. Asparagine 241 and threonine 242 together coordinate pyridoxal 5'-phosphate. Residues lysine 269, lysine 318, and lysine 323 each carry the N6-acetyllysine modification. The residue at position 331 (serine 331) is a Phosphoserine. Lysine 333 bears the N6-acetyllysine mark. The O-phospho-L-serine site is built by histidine 335, arginine 336, and arginine 342.

The protein belongs to the class-V pyridoxal-phosphate-dependent aminotransferase family. SerC subfamily. In terms of assembly, homodimer. Requires pyridoxal 5'-phosphate as cofactor.

It catalyses the reaction O-phospho-L-serine + 2-oxoglutarate = 3-phosphooxypyruvate + L-glutamate. Its pathway is amino-acid biosynthesis; L-serine biosynthesis; L-serine from 3-phospho-D-glycerate: step 2/3. Involved in L-serine biosynthesis via the phosphorylated pathway, a three-step pathway converting the glycolytic intermediate 3-phospho-D-glycerate into L-serine. Catalyzes the second step, that is the pyridoxal 5'-phosphate-dependent transamination of 3-phosphohydroxypyruvate and L-glutamate to O-phosphoserine (OPS) and alpha-ketoglutarate. The polypeptide is Phosphoserine aminotransferase (PSAT1) (Oryctolagus cuniculus (Rabbit)).